A 281-amino-acid polypeptide reads, in one-letter code: Pantothenate synthetase (281 aa).

31-38 contributes to the ATP binding site; that stretch reads MGNLHAGH. Residue histidine 38 is the Proton donor of the active site. Glutamine 62 lines the (R)-pantoate pocket. Glutamine 62 lines the beta-alanine pocket. 150 to 153 contributes to the ATP binding site; that stretch reads GKKD. A (R)-pantoate-binding site is contributed by glutamine 156. ATP contacts are provided by residues valine 179 and 187–190; that span reads MSSR.

It belongs to the pantothenate synthetase family. In terms of assembly, homodimer.

Its subcellular location is the cytoplasm. It carries out the reaction (R)-pantoate + beta-alanine + ATP = (R)-pantothenate + AMP + diphosphate + H(+). The protein operates within cofactor biosynthesis; (R)-pantothenate biosynthesis; (R)-pantothenate from (R)-pantoate and beta-alanine: step 1/1. Its function is as follows. Catalyzes the condensation of pantoate with beta-alanine in an ATP-dependent reaction via a pantoyl-adenylate intermediate. This chain is Pantothenate synthetase, found in Xylella fastidiosa (strain 9a5c).